We begin with the raw amino-acid sequence, 319 residues long: Translocon-associated protein subunit alpha (319 aa).

The signal sequence occupies residues 1–21; it reads MRLLPRLLLLFLLAFPAAVLL. Over 22–208 the chain is Lumenal; sequence RGGPGGSLAV…EREDGLDGET (187 aa). The span at 35–76 shows a compositional bias: acidic residues; that stretch reads LTEDEETVEDPIIEDEDDEAEVEEDEPTDLAEEKEEEEDVSS. The interval 35–84 is disordered; it reads LTEDEETVEDPIIEDEDDEAEVEEDEPTDLAEEKEEEEDVSSEPEASPSA. N-linked (GlcNAc...) asparagine glycans are attached at residues Asn137 and Asn192. The helical transmembrane segment at 209–229 threads the bilayer; that stretch reads IFMYMFLAGLGLLVVVGLHQL. The Cytoplasmic portion of the chain corresponds to 230–319; sequence LESRKRKRPI…SLRQLAVCGI (90 aa). Ser248 is subject to Phosphoserine. Thr261 is modified (phosphothreonine).

Belongs to the TRAP-alpha family. As to quaternary structure, heterotetramer of TRAP-alpha, TRAP-beta, TRAP-delta and TRAP-gamma. Interacts with palmitoylated calnexin (CALX), the interaction is required for efficient folding of glycosylated proteins.

The protein localises to the endoplasmic reticulum membrane. Functionally, TRAP proteins are part of a complex whose function is to bind calcium to the ER membrane and thereby regulate the retention of ER resident proteins. May be involved in the recycling of the translocation apparatus after completion of the translocation process or may function as a membrane-bound chaperone facilitating folding of translocated proteins. The sequence is that of Translocon-associated protein subunit alpha (Ssr1) from Rattus norvegicus (Rat).